A 208-amino-acid chain; its full sequence is Dephospho-CoA kinase (208 aa).

In terms of domain architecture, DPCK spans 3–208; it reads EIGLTGGIGS…ALSAAGVTQA (206 aa). Position 11 to 16 (11 to 16) interacts with ATP; sequence GSGKTR.

This sequence belongs to the CoaE family.

Its subcellular location is the cytoplasm. It carries out the reaction 3'-dephospho-CoA + ATP = ADP + CoA + H(+). Its pathway is cofactor biosynthesis; coenzyme A biosynthesis; CoA from (R)-pantothenate: step 5/5. Its function is as follows. Catalyzes the phosphorylation of the 3'-hydroxyl group of dephosphocoenzyme A to form coenzyme A. The protein is Dephospho-CoA kinase of Cupriavidus pinatubonensis (strain JMP 134 / LMG 1197) (Cupriavidus necator (strain JMP 134)).